The primary structure comprises 94 residues: Small ribosomal subunit protein bS18 (94 aa).

Low complexity predominate over residues Met1–Glu12. Residues Met1–Lys29 form a disordered region. Residues Arg16–Lys29 show a composition bias toward basic residues.

Belongs to the bacterial ribosomal protein bS18 family. In terms of assembly, part of the 30S ribosomal subunit. Forms a tight heterodimer with protein bS6.

In terms of biological role, binds as a heterodimer with protein bS6 to the central domain of the 16S rRNA, where it helps stabilize the platform of the 30S subunit. The protein is Small ribosomal subunit protein bS18 of Leuconostoc mesenteroides subsp. mesenteroides (strain ATCC 8293 / DSM 20343 / BCRC 11652 / CCM 1803 / JCM 6124 / NCDO 523 / NBRC 100496 / NCIMB 8023 / NCTC 12954 / NRRL B-1118 / 37Y).